The chain runs to 472 residues: MAIWFARSKTLVSSLRHNLNLSTILIKRDYSHRPIFYTTSQLSSTAYLSPFGSLRHESTAVETQADHLVQQIDEVDAQELDFPGGKVGYTSEMKFIPESSSRRIPCYRVLDEDGRIIPDSDFIPVSEKLAVRMYEQMATLQVMDHIFYEAQRQGRISFYLTSVGEEAINIASAAALSPDDVVLPQYREPGVLLWRGFTLEEFANQCFGNKADYGKGRQMPIHYGSNRLNYFTISSPIATQLPQAAGVGYSLKMDKKNACTVTFIGDGGTSEGDFHAGLNFAAVMEAPVVFICRNNGWAISTHISEQFRSDGIVVKGQAYGIRSIRVDGNDALAVYSAVRSAREMAVTEQRPVLIEMMTYRVGHHSTSDDSTKYRAADEIQYWKMSRNPVNRFRKWVEDNGWWSEEDESKLRSNARKQLLQAIQAAEKWEKQPLTELFNDVYDVKPKNLEEQELGLKELVKKQPQDYPPGFHV.

Residues 1–56 (MAIWFARSKTLVSSLRHNLNLSTILIKRDYSHRPIFYTTSQLSSTAYLSPFGSLRH) constitute a mitochondrion transit peptide. 185–187 (QYR) contacts thiamine diphosphate. K(+)-binding residues include Ser-234, Thr-239, and Gln-240.

Belongs to the BCKDHA family. Heterotetramer of alpha and beta chains. It depends on thiamine diphosphate as a cofactor.

Its subcellular location is the mitochondrion matrix. The enzyme catalyses N(6)-[(R)-lipoyl]-L-lysyl-[protein] + 3-methyl-2-oxobutanoate + H(+) = N(6)-[(R)-S(8)-2-methylpropanoyldihydrolipoyl]-L-lysyl-[protein] + CO2. The branched-chain alpha-keto dehydrogenase complex catalyzes the overall conversion of alpha-keto acids to acyl-CoA and CO(2). It contains multiple copies of three enzymatic components: branched-chain alpha-keto acid decarboxylase (E1), lipoamide acyltransferase (E2) and lipoamide dehydrogenase (E3). Required during sugar starvation. The polypeptide is 2-oxoisovalerate dehydrogenase subunit alpha 1, mitochondrial (Arabidopsis thaliana (Mouse-ear cress)).